Reading from the N-terminus, the 395-residue chain is Acid ceramidase (395 aa).

Residues M1–V20 form the signal peptide. C31 and C340 are oxidised to a cystine. The active-site Nucleophile is the C143. N195, N259, N286, and N342 each carry an N-linked (GlcNAc...) asparagine glycan. A disulfide bond links C388 and C392.

Belongs to the acid ceramidase family. In terms of assembly, heterodimer; disulfide-linked. The heterodimer is composed of the disulfide-linked alpha and beta chains produced by autocatalytic cleavage of the precursor. Post-translationally, N-glycosylated. In terms of processing, proteolytically cleaved into two chains alpha and beta that remain associated via a disulfide bond. Cleavage gives rise to a conformation change that activates the enzyme. The same catalytic Cys residue mediates the autoproteolytic cleavage and subsequent hydrolysis of lipid substrates. The beta chain may undergo an additional C-terminal processing.

It localises to the lysosome. The protein resides in the secreted. It catalyses the reaction an N-acylsphing-4-enine + H2O = sphing-4-enine + a fatty acid. It carries out the reaction N-dodecanoylsphing-4-enine + H2O = dodecanoate + sphing-4-enine. The enzyme catalyses N-tetradecanoylsphing-4-enine + H2O = tetradecanoate + sphing-4-enine. The catalysed reaction is N-hexadecanoylsphing-4-enine + H2O = sphing-4-enine + hexadecanoate. It catalyses the reaction N-octadecanoylsphing-4-enine + H2O = sphing-4-enine + octadecanoate. It carries out the reaction N-dodecanoyl-(4R)-hydroxysphinganine + H2O = (4R)-hydroxysphinganine + dodecanoate. The enzyme catalyses N-(dodecanoyl)-sphinganine + H2O = dodecanoate + sphinganine. The catalysed reaction is N-(acetyl)-sphing-4-enine + H2O = sphing-4-enine + acetate. It catalyses the reaction N-(hexanoyl)sphing-4-enine + H2O = hexanoate + sphing-4-enine. It carries out the reaction N-octanoylsphing-4-enine + H2O = octanoate + sphing-4-enine. The enzyme catalyses N-(9Z-octadecenoyl)-sphing-4-enine + H2O = sphing-4-enine + (9Z)-octadecenoate. The catalysed reaction is N-dodecanoylethanolamine + H2O = dodecanoate + ethanolamine. It participates in lipid metabolism; sphingolipid metabolism. Functionally, lysosomal ceramidase that hydrolyzes sphingolipid ceramides into sphingosine and free fatty acids at acidic pH. Ceramides, sphingosine, and its phosphorylated form sphingosine-1-phosphate are bioactive lipids that mediate cellular signaling pathways regulating several biological processes including cell proliferation, apoptosis and differentiation. Has a higher catalytic efficiency towards C12-ceramides versus other ceramides. Also catalyzes the reverse reaction allowing the synthesis of ceramides from fatty acids and sphingosine. For the reverse synthetic reaction, the natural sphingosine D-erythro isomer is more efficiently utilized as a substrate compared to D-erythro-dihydrosphingosine and D-erythro-phytosphingosine, while the fatty acids with chain lengths of 12 or 14 carbons are the most efficiently used. Also has an N-acylethanolamine hydrolase activity. By regulating the levels of ceramides, sphingosine and sphingosine-1-phosphate in the epidermis, mediates the calcium-induced differentiation of epidermal keratinocytes. Also indirectly regulates tumor necrosis factor/TNF-induced apoptosis. By regulating the intracellular balance between ceramides and sphingosine, in adrenocortical cells, probably also acts as a regulator of steroidogenesis. This chain is Acid ceramidase, found in Bos taurus (Bovine).